The primary structure comprises 133 residues: MADKLHFDLVSPERRLFAGNVDQVVVPGEEGDFGVLPNHAPFMSVIRPGAITVIDDGKETRTFIHGGFAEVTAAGLTILAEEAIAVADIDTEKLARDLSDAREDVTAAKDEEERDQAAALVAKYEAMQAVAAH.

Belongs to the ATPase epsilon chain family. As to quaternary structure, F-type ATPases have 2 components, CF(1) - the catalytic core - and CF(0) - the membrane proton channel. CF(1) has five subunits: alpha(3), beta(3), gamma(1), delta(1), epsilon(1). CF(0) has three main subunits: a, b and c.

It localises to the cell inner membrane. In terms of biological role, produces ATP from ADP in the presence of a proton gradient across the membrane. The sequence is that of ATP synthase epsilon chain from Maricaulis maris (strain MCS10) (Caulobacter maris).